Consider the following 319-residue polypeptide: L-lactate dehydrogenase 2 (319 aa).

Residues valine 16, aspartate 37, lysine 42, tyrosine 68, and 82–83 (GA) each bind NAD(+). Glutamine 85 and arginine 91 together coordinate substrate. NAD(+) is bound by residues serine 104, 121 to 123 (AAN), and serine 146. 123 to 126 (NPVD) serves as a coordination point for substrate. 151 to 154 (DSAR) contributes to the substrate binding site. Histidine 178 serves as the catalytic Proton acceptor. Phosphotyrosine is present on tyrosine 222. A substrate-binding site is contributed by threonine 231.

This sequence belongs to the LDH/MDH superfamily. LDH family. Homotetramer.

It localises to the cytoplasm. It catalyses the reaction (S)-lactate + NAD(+) = pyruvate + NADH + H(+). It participates in fermentation; pyruvate fermentation to lactate; (S)-lactate from pyruvate: step 1/1. Its function is as follows. Catalyzes the conversion of lactate to pyruvate (Potential). Contributes to S.aureus growth during nitrosative stress in both aerobically and anaerobically cultured cells, despite playing a secondary role in this resistance mechanism. The protein is L-lactate dehydrogenase 2 of Staphylococcus aureus (strain Mu3 / ATCC 700698).